The following is a 229-amino-acid chain: Cytochrome c oxidase assembly factor 7 (229 aa).

Sel1-like repeat units lie at residues 34-66, 68-104, 108-145, 146-182, and 183-218; these read PEGCHRLADYLEGVKKNYESTAQVLQHNCEVNA, AQSCYKLGAYHVTGKGGMKKCLKTAYSCFLKSCNTQG, VDACHNVGLLAQDGRALETGPDTTVARQYFEKACEGGF, APSCFNLSTLYIQGFPGLDKSMPLALKYALKACDLGH, and VWGCANASRMYKLGDGTDKDEQRAEELKNRAKDLHG. The tract at residues 197-229 is disordered; that stretch reads DGTDKDEQRAEELKNRAKDLHGQEKERQLKFGE.

This sequence belongs to the hcp beta-lactamase family.

The protein resides in the mitochondrion intermembrane space. May be required for assembly of mitochondrial respiratory chain complexes. In Danio rerio (Zebrafish), this protein is Cytochrome c oxidase assembly factor 7 (coa7).